The following is a 418-amino-acid chain: Putative competence-damage inducible protein (418 aa).

Belongs to the CinA family.

In Streptococcus pneumoniae (strain CGSP14), this protein is Putative competence-damage inducible protein.